Consider the following 2552-residue polypeptide: MDYKNKYQSNENCNKVAIIGIGFRFPNLKGDLTPNGLWSQLLNKYDGIVKNDRWNESFYKTGDIPTKYAGLIPFEELKSFDPLFFGINPSEVIHMCPQQRILLKCTWEALEDSGIDPIEIRDSNTSVFLGCSNFDYQNLNKNNNKIQQNIFASSSHSVSNRISYCFDLHGESMTIDTACSSSSNAIRRGYKSIIDGSSNISVVGGINILLDPNTSKSYSQLNMLGKDGKCKTFDADADGYVRSESAGIAILKNLNDAIKDGNNIYCVIDGSASNVDGNGFSDKSNFYSPSKSSQVECIRLALESTNGGVNENDIVYFEAHGTGTPTGDPIELESVSIALKTSENRSSNNPLLIGSFKPNIGHSECASGISSLIKCCLILKNQCFVPNINYNKPNPNIKFNQWNLKVVTDPIDFSTLKLSNKPISIAINNFGVTGSNCCLIVSSFKGNQTNNNNNKSKSPKQYLIPFSTNSIKSLDLYKSRIDNNVEFKEFAENQIKSKSKKLIQRSVAIASNWDEFNLKSNTINTSNDKLTSNMLVSSNKKNATMVFVFCGQGAQYSTMAKNLYDNEPIFKKSMDKIDSKLSEYYGFSILEKLRSFNENDLKGIQYSIIAQPSTCMVQISLFELYCHWGIKPSIIVGHSLGEISSSYCSGMIDLDTFCYLIYHRSMVQSKTNGLGRMLSISIGENEYNSKYSSRYPELEIACYNSPSSIVIAGKELILNEIIKELKQDGVFCTILGSPTSFHTSSQIPVKDEILKISFKSKQSTYPIFSTVTTNLYDEMNPFDTKYVYDNIINPVRFTNTISNIYKHIELNYSVNNNSNEIIFIEIAPHPTLSFYLKQMVPEDKKQSVSIFSPLSKKKSNDLFEIQKLISELYCLGYNGIGFNIQLSNLNENDNIQTSLSLPLYQWEEQEYWKLDSLYQHHLSNGPSINHLGISNSNHTPYIKSYQTHIDIQKKPFQWLKGHQIKGKYYFPGCGYIDNILKIFGDNSESTTNPNKELPDILISFIEFKTPLIFMDGVNQCLQTNIHSTGKKEYKALFHFKDEKSSSDWVQTSTANFQLFSRGQGLNEDDEESLFKYNINDLISNQCNLTKLSKQELYSHIKTKCGLNYSGDFQRVEKCYFGNNCSLSELSLSQGVNENRSTFFDSSIIDCCLHGSIGLIDENCQLVFEKLEGLTYYSSKVPTTTSQHSKIYVYSKLKPRIGDSYSASIIVMLENGTVLFEMENASFKSTTKIKDSLAMEYPTNEIYSCYLQSKDSLIPSLSSFDHIFKRKITDEYVDQIKIYESFIPKLLFSNINKRCPEITIAEIQSSEIEQLLLKYYKIKEDNDNKWLSRLFTFAFESIKQWYHNEDYDFENVLSPHNFKIFSKSTKIISKLLFPLENDNDEDSPQSLFEGGLLDKFYSSGFSAQNELVGEIIQESIKPILNEKLVFRILEFGGGVGSLSLLVLEKINSLLIQYPNYQIDIEYTWSDISPSFITEAKAKFEKFNDRVNIIYKALNLEQPLIGEKQGLKPQYFDYIIMFNVLHVIKDVKYGVEQIYQLLVPNGHLLFIEPIYKSIVGDGIFGVFDQWWSFQDTEIRKDRCCMNQQTWYKLLKSVNFNDDIKMTPELTCFVIQAQKPSISNLSFSKSETTNYNNIIVFGNKDDSNLSNNFIKSIDNGNLQFISTIEEFNKMTKYISNESIIYFIKSIDELSVDNFVNITHEYTQINQKLMELNSKCKHVLITNDSTTTNYLSSSLIGAARYYHECPLELFILNFDTPSIIENQNLFKTIEPLINSSINIQREFIINNHKVYYERIKNETKLKSIFKNSSSFESLEQVDNFMISLTPNLEYKVKVKPTSILKENEVEIKVMSTGLNYKDYLIYAGLVESVEPIFGIEFSGIITNIGSGNKEFKVGDSVYGTGKSTTSSHIITDIDVISHKPSNISHSEASSIPVVYLTSYHSLYNIGALKNNETILIHSATGGVGLSTLEILKWKGHSGLIFVTVGSNEKEEYLRENYGDMISGIYSTRNKNFVKQIKSKISKLNPFGKSGVDFILNTLSSSDYMDSNFKCLNMSGRIVDLSITHLNSNEFTDNKKFKYNYGYHNIELQYVDKKIIKSTLSIISNAVSSNDLQLIPITEYSIENVKDSIEFINERVHMGKIVVDHENQDSIINELIEKQKSIDKFDQSIFKQNYKLEPSLLGKNILITGQSGIVLEILKWILRNSENNSIDNIIILSKSSIKWEMELLINKTKLLNSNSINSMGNYLNKIKFHFKSVDISDSGLTDKGIHELLIENPDINNIDSIFHFAYTQATCNSDEVDLHHLTQSHSAKSMGAINLHNQSIKRNWKIINFIMSSSITSKTSSANQCGYISSNNVLDALSKYRISIGLPTICTNYGLIQSTGFVSRNESVAALLSGEGLLPISTNLILGTLDLQLQNQAQSSNLILSNFNFTSLNGLPQKSLISKFDYQININEENEKSKSLLKDDNVELTVDQLITFKISELLSTDILKLNKDIILVDYGVDSLVIIQLKNWVDKEFSIPNALTIQQVQNSTINSFIQLVKNSIDKKNKK.

Residues 13–443 enclose the Ketosynthase family 3 (KS3) domain; sequence CNKVAIIGIG…GSNCCLIVSS (431 aa). Catalysis depends on for beta-ketoacyl synthase activity residues C179, H320, and H362. The acyl/malonyl transferase stretch occupies residues 629-662; that stretch reads GIKPSIIVGHSLGEISSSYCSGMIDLDTFCYLIY. Residue S639 is the For acyl/malonyl transferase activity of the active site. Residues 928–1063 are N-terminal hotdog fold; it reads INHLGISNSN…ANFQLFSRGQ (136 aa). Positions 928–1235 constitute a PKS/mFAS DH domain; sequence INHLGISNSN…FKSTTKIKDS (308 aa). H962 serves as the catalytic Proton acceptor; for dehydratase activity. The C-terminal hotdog fold stretch occupies residues 1087–1235; sequence NLTKLSKQEL…FKSTTKIKDS (149 aa). The active-site Proton donor; for dehydratase activity is D1149. Residues 2467-2546 form the Carrier domain; the sequence is DNVELTVDQL…SFIQLVKNSI (80 aa). S2505 is subject to O-(pantetheine 4'-phosphoryl)serine.

Pantetheine 4'-phosphate serves as cofactor.

Probable polyketide synthase. The chain is Probable polyketide synthase 40 (pks40) from Dictyostelium discoideum (Social amoeba).